The primary structure comprises 224 residues: Uracil-DNA glycosylase (224 aa).

Asp61 (proton acceptor) is an active-site residue.

This sequence belongs to the uracil-DNA glycosylase (UDG) superfamily. UNG family.

The protein resides in the cytoplasm. It catalyses the reaction Hydrolyzes single-stranded DNA or mismatched double-stranded DNA and polynucleotides, releasing free uracil.. Excises uracil residues from the DNA which can arise as a result of misincorporation of dUMP residues by DNA polymerase or due to deamination of cytosine. This is Uracil-DNA glycosylase from Mannheimia succiniciproducens (strain KCTC 0769BP / MBEL55E).